Consider the following 342-residue polypeptide: Nicotinate-nucleotide--dimethylbenzimidazole phosphoribosyltransferase (342 aa).

Glu-311 serves as the catalytic Proton acceptor.

This sequence belongs to the CobT family.

The enzyme catalyses 5,6-dimethylbenzimidazole + nicotinate beta-D-ribonucleotide = alpha-ribazole 5'-phosphate + nicotinate + H(+). Its pathway is nucleoside biosynthesis; alpha-ribazole biosynthesis; alpha-ribazole from 5,6-dimethylbenzimidazole: step 1/2. In terms of biological role, catalyzes the synthesis of alpha-ribazole-5'-phosphate from nicotinate mononucleotide (NAMN) and 5,6-dimethylbenzimidazole (DMB). This chain is Nicotinate-nucleotide--dimethylbenzimidazole phosphoribosyltransferase, found in Vibrio atlanticus (strain LGP32) (Vibrio splendidus (strain Mel32)).